The sequence spans 176 residues: Translation initiation factor IF-3 (176 aa).

Belongs to the IF-3 family. Monomer.

It is found in the cytoplasm. IF-3 binds to the 30S ribosomal subunit and shifts the equilibrium between 70S ribosomes and their 50S and 30S subunits in favor of the free subunits, thus enhancing the availability of 30S subunits on which protein synthesis initiation begins. This Microcystis aeruginosa (strain NIES-843 / IAM M-2473) protein is Translation initiation factor IF-3.